A 602-amino-acid polypeptide reads, in one-letter code: Putative pentatricopeptide repeat-containing protein At1g12700, mitochondrial (602 aa).

A mitochondrion-targeting transit peptide spans 1 to 95 (MMIKRSITTN…PSLVDFSRFF (95 aa)). PPR repeat units follow at residues 87-121 (SLVD…GIAH), 122-156 (NIYT…GYEP), 157-191 (DTTT…GCQP), 192-226 (DVVT…NVKA), 227-261 (DVFT…GIKS), 262-296 (SVVT…EIVP), 297-331 (NVIT…GISP), 332-366 (NIIT…KCSP), 367-401 (DIVT…GLVA), 402-436 (NAVT…GVLP), 437-471 (DVMT…KMDL), 472-506 (GIVM…GVKP), 507-541 (NVMT…GNAP), and 542-576 (NDCT…GFSA).

The protein belongs to the PPR family. P subfamily.

It localises to the mitochondrion. The chain is Putative pentatricopeptide repeat-containing protein At1g12700, mitochondrial from Arabidopsis thaliana (Mouse-ear cress).